The sequence spans 853 residues: Trimethylguanosine synthase (853 aa).

The tract at residues 54 to 84 (NNAGDQGTEEEEDGHSNGTAESHSPNESDLD) is disordered. Position 61 is a phosphothreonine (Thr61). Residues 69–80 (SNGTAESHSPNE) are compositionally biased toward polar residues. A phosphoserine mark is found at Ser81, Ser85, Ser92, and Ser139. Tyr144 is modified (phosphotyrosine). At Ser152 the chain carries Phosphoserine. Disordered stretches follow at residues 328 to 437 (VEQS…DDNG) and 523 to 549 (ETSQ…QDMS). Residues 365-383 (KENDISENRSSDQPAKELQ) show a composition bias toward basic and acidic residues. 2 positions are modified to phosphoserine: Ser405 and Ser431. The span at 424-435 (DVDENPDSEVDD) shows a compositional bias: acidic residues. Residues 526 to 541 (QDSLSQNKMQDTCTSS) show a composition bias toward polar residues. Ser572 carries the phosphoserine modification. Residues 594 to 623 (CSTEEIPNSPHAETEVEIKKKKKKNKNKKI) form a disordered region. Residues 612–621 (KKKKKKNKNK) show a composition bias toward basic residues. Asp711 serves as a coordination point for S-adenosyl-L-methionine.

It belongs to the methyltransferase superfamily. Trimethylguanosine synthase family. In terms of assembly, may form homooligomers. Interacts with CREBBP/CBP, EED/WAIT1, EP300/P300, NCOA6/PRIP, PPARBP/PBP and SMN. In terms of tissue distribution, ubiquitously expressed.

The protein resides in the cytoplasm. The protein localises to the nucleus. It localises to the cajal body. Its subcellular location is the nucleolus. It catalyses the reaction a 5'-end (N(7)-methyl 5'-triphosphoguanosine)-ribonucleoside in snRNA + S-adenosyl-L-methionine = a 5'-end (N(2),N(7)-dimethyl 5'-triphosphoguanosine)-ribonucleoside in snRNA + S-adenosyl-L-homocysteine + H(+). It carries out the reaction a 5'-end (N(7)-methyl 5'-triphosphoguanosine)-ribonucleoside in snoRNA + S-adenosyl-L-methionine = a 5'-end (N(2),N(7)-dimethyl 5'-triphosphoguanosine)-ribonucleoside in snoRNA + S-adenosyl-L-homocysteine + H(+). The enzyme catalyses a 5'-end (N(2),N(7)-dimethyl 5'-triphosphoguanosine)-ribonucleoside in snRNA + S-adenosyl-L-methionine = a 5'-end (N(2),N(2),N(7)-trimethyl 5'-triphosphoguanosine)-ribonucleoside in snRNA + S-adenosyl-L-homocysteine + H(+). The catalysed reaction is a 5'-end (N(2),N(7)-dimethyl 5'-triphosphoguanosine)-ribonucleoside in snoRNA + S-adenosyl-L-methionine = a 5'-end (N(2),N(2),N(7)-trimethyl 5'-triphosphoguanosine)-ribonucleoside in snoRNA + S-adenosyl-L-homocysteine + H(+). Its function is as follows. Catalyzes the 2 serial methylation steps for the conversion of the 7-monomethylguanosine (m(7)G) caps of snRNAs and snoRNAs to a 2,2,7-trimethylguanosine (m(2,2,7)G) cap structure. The enzyme is specific for guanine, and N7 methylation must precede N2 methylation. Hypermethylation of the m7G cap of U snRNAs leads to their concentration in nuclear foci, their colocalization with coilin and the formation of canonical Cajal bodies (CBs). Plays a role in transcriptional regulation. In Mus musculus (Mouse), this protein is Trimethylguanosine synthase (Tgs1).